The primary structure comprises 338 residues: Methionine import ATP-binding protein MetN 2 (338 aa).

In terms of domain architecture, ABC transporter spans 2–242; that stretch reads IEIEKVCVDF…PQHAFTQQLV (241 aa). An ATP-binding site is contributed by 39–46; the sequence is GTSGAGKS.

It belongs to the ABC transporter superfamily. Methionine importer (TC 3.A.1.24) family. As to quaternary structure, the complex is composed of two ATP-binding proteins (MetN), two transmembrane proteins (MetI) and a solute-binding protein (MetQ).

It is found in the cell inner membrane. It catalyses the reaction L-methionine(out) + ATP + H2O = L-methionine(in) + ADP + phosphate + H(+). The catalysed reaction is D-methionine(out) + ATP + H2O = D-methionine(in) + ADP + phosphate + H(+). Functionally, part of the ABC transporter complex MetNIQ involved in methionine import. Responsible for energy coupling to the transport system. In Salmonella paratyphi A (strain ATCC 9150 / SARB42), this protein is Methionine import ATP-binding protein MetN 2.